Here is a 163-residue protein sequence, read N- to C-terminus: Cyclic pyranopterin monophosphate synthase (163 aa).

Residues 75–77 (LCH) and 113–114 (ME) each bind substrate. Residue Asp128 is part of the active site.

The protein belongs to the MoaC family. In terms of assembly, homohexamer; trimer of dimers.

The catalysed reaction is (8S)-3',8-cyclo-7,8-dihydroguanosine 5'-triphosphate = cyclic pyranopterin phosphate + diphosphate. Its pathway is cofactor biosynthesis; molybdopterin biosynthesis. Functionally, catalyzes the conversion of (8S)-3',8-cyclo-7,8-dihydroguanosine 5'-triphosphate to cyclic pyranopterin monophosphate (cPMP). This chain is Cyclic pyranopterin monophosphate synthase, found in Magnetococcus marinus (strain ATCC BAA-1437 / JCM 17883 / MC-1).